A 188-amino-acid polypeptide reads, in one-letter code: Ion-translocating oxidoreductase complex subunit B (188 aa).

Positions 1–26 are hydrophobic; the sequence is MNGVFLAIGALLPICLAGGALLGYAA. A 4Fe-4S domain is found at 32-90; that stretch reads QGDPVAEQVNALLPQTQCGQCGYPGCKPYAEAIAAGDKINKCPPGGEATIRALADLLDL. Residues Cys-49, Cys-52, Cys-57, Cys-73, Cys-113, Cys-116, Cys-119, Cys-123, Cys-143, Cys-146, Cys-149, and Cys-153 each coordinate [4Fe-4S] cluster. 4Fe-4S ferredoxin-type domains follow at residues 104–133 and 134–163; these read RVAY…GAAR and LMHT…MRET.

The protein belongs to the 4Fe4S bacterial-type ferredoxin family. RnfB subfamily. In terms of assembly, the complex is composed of six subunits: RnfA, RnfB, RnfC, RnfD, RnfE and RnfG. It depends on [4Fe-4S] cluster as a cofactor.

It localises to the cell inner membrane. Part of a membrane-bound complex that couples electron transfer with translocation of ions across the membrane. The polypeptide is Ion-translocating oxidoreductase complex subunit B (Pseudomonas aeruginosa (strain UCBPP-PA14)).